The following is a 98-amino-acid chain: NADH-ubiquinone oxidoreductase chain 4L (98 aa).

The next 3 helical transmembrane spans lie at M1–M21, A29–L49, and I61–V81.

It belongs to the complex I subunit 4L family. As to quaternary structure, core subunit of respiratory chain NADH dehydrogenase (Complex I) which is composed of 45 different subunits.

Its subcellular location is the mitochondrion inner membrane. It carries out the reaction a ubiquinone + NADH + 5 H(+)(in) = a ubiquinol + NAD(+) + 4 H(+)(out). Its function is as follows. Core subunit of the mitochondrial membrane respiratory chain NADH dehydrogenase (Complex I) which catalyzes electron transfer from NADH through the respiratory chain, using ubiquinone as an electron acceptor. Part of the enzyme membrane arm which is embedded in the lipid bilayer and involved in proton translocation. The protein is NADH-ubiquinone oxidoreductase chain 4L (MT-ND4L) of Balaenoptera bonaerensis (Antarctic minke whale).